Here is a 204-residue protein sequence, read N- to C-terminus: MRG/MORF4L-binding protein (204 aa).

The span at 1–15 (MGEAEVGGTGAPGDK) shows a compositional bias: gly residues. Residues 1-27 (MGEAEVGGTGAPGDKGPGEAAPSPAEE) form a disordered region. Gly2 is modified (N-acetylglycine). Ser23 carries the phosphoserine modification. A Glycyl lysine isopeptide (Lys-Gly) (interchain with G-Cter in SUMO2) cross-link involves residue Lys127. Composition is skewed to basic and acidic residues over residues 128 to 140 (EEMKEDVDPHSGA) and 153 to 175 (ALEKSSKDKEKNSSDLGCKEGAD). The interval 128-204 (EEMKEDVDPH…SPSAAKRRRT (77 aa)) is disordered. Residues 189 to 198 (ANSNPSSPSA) show a composition bias toward low complexity. Ser191 and Ser195 each carry phosphoserine.

Belongs to the EAF7 family. As to quaternary structure, component of the NuA4 histone acetyltransferase complex which contains the catalytic subunit KAT5/TIP60 and the subunits EP400, TRRAP/PAF400, BRD8/SMAP, EPC1, DMAP1/DNMAP1, RUVBL1/TIP49, RUVBL2, ING3, actin, ACTL6A/BAF53A, MORF4L1/MRG15, MORF4L2/MRGX, MRGBP, YEATS4/GAS41, VPS72/YL1 and MEAF6. MRGBP may interact directly with MORF4L1/MRG15 and MORF4L2/MRGX.

The protein resides in the nucleus. Component of the NuA4 histone acetyltransferase (HAT) complex which is involved in transcriptional activation of select genes principally by acetylation of nucleosomal histones H4 and H2A. This modification may both alter nucleosome - DNA interactions and promote interaction of the modified histones with other proteins which positively regulate transcription. This complex may be required for the activation of transcriptional programs associated with oncogene and proto-oncogene mediated growth induction, tumor suppressor mediated growth arrest and replicative senescence, apoptosis, and DNA repair. NuA4 may also play a direct role in DNA repair when recruited to sites of DNA damage. The protein is MRG/MORF4L-binding protein (Mrgbp) of Mus musculus (Mouse).